The sequence spans 250 residues: ATP synthase subunit a (250 aa).

The next 6 membrane-spanning stretches (helical) occupy residues 27-47 (FTNA…FLTF), 85-105 (FFPL…VGLI), 115-135 (LIVT…YGFV), 141-161 (FLHL…LVVI), 181-201 (MLAG…LASA), and 223-243 (ELLV…IYLN).

Belongs to the ATPase A chain family. As to quaternary structure, F-type ATPases have 2 components, CF(1) - the catalytic core - and CF(0) - the membrane proton channel. CF(1) has five subunits: alpha(3), beta(3), gamma(1), delta(1), epsilon(1). CF(0) has three main subunits: a(1), b(2) and c(9-12). The alpha and beta chains form an alternating ring which encloses part of the gamma chain. CF(1) is attached to CF(0) by a central stalk formed by the gamma and epsilon chains, while a peripheral stalk is formed by the delta and b chains.

The protein localises to the cell inner membrane. Functionally, key component of the proton channel; it plays a direct role in the translocation of protons across the membrane. The protein is ATP synthase subunit a of Xanthobacter autotrophicus (strain ATCC BAA-1158 / Py2).